The following is a 276-amino-acid chain: Proteasome subunit beta type-8 (276 aa).

The propeptide at 1-72 (MALLEVCGAP…KNIRKEMVHG (72 aa)) is removed in mature form. Thr73 serves as the catalytic Nucleophile.

This sequence belongs to the peptidase T1B family. The 26S proteasome consists of a 20S proteasome core and two 19S regulatory subunits. The 20S proteasome core is composed of 28 subunits that are arranged in four stacked rings, resulting in a barrel-shaped structure. The two end rings are each formed by seven alpha subunits, and the two central rings are each formed by seven beta subunits. The catalytic chamber with the active sites is on the inside of the barrel. Component of the immunoproteasome, where it displaces the equivalent housekeeping subunit PSMB5. Component of the spermatoproteasome, a form of the proteasome specifically found in testis. Directly interacts with POMP. Post-translationally, autocleaved. The resulting N-terminal Thr residue of the mature subunit is responsible for the nucleophile proteolytic activity.

It is found in the cytoplasm. It localises to the nucleus. The enzyme catalyses Cleavage of peptide bonds with very broad specificity.. The proteasome is a multicatalytic proteinase complex which is characterized by its ability to cleave peptides with Arg, Phe, Tyr, Leu, and Glu adjacent to the leaving group at neutral or slightly basic pH. The proteasome has an ATP-dependent proteolytic activity. This subunit is involved in antigen processing to generate class I binding peptides. May participate in the generation of spliced peptides resulting from the ligation of two separate proteasomal cleavage products that are not contiguous in the parental protein. Required for adipocyte differentiation. This chain is Proteasome subunit beta type-8 (PSMB8), found in Canis lupus familiaris (Dog).